The chain runs to 433 residues: Tol-Pal system protein TolB (433 aa).

The signal sequence occupies residues 1–21 (MINLFRGLLVVLCFASAMVSA).

Belongs to the TolB family. As to quaternary structure, the Tol-Pal system is composed of five core proteins: the inner membrane proteins TolA, TolQ and TolR, the periplasmic protein TolB and the outer membrane protein Pal. They form a network linking the inner and outer membranes and the peptidoglycan layer.

It localises to the periplasm. Functionally, part of the Tol-Pal system, which plays a role in outer membrane invagination during cell division and is important for maintaining outer membrane integrity. This is Tol-Pal system protein TolB from Pseudomonas syringae pv. syringae (strain B728a).